Reading from the N-terminus, the 172-residue chain is Propanediol dehydratase small subunit (172 aa).

The protein belongs to the diol/glycerol dehydratase small subunit family. As to quaternary structure, the propanediol dehydratase enzyme is a heterotrimeric complex composed of a large (PduC), a medium (PduD) and a small (PduE) subunit. Adenosylcob(III)alamin is required as a cofactor.

The protein localises to the bacterial microcompartment. It catalyses the reaction propane-1,2-diol = propanal + H2O. Its pathway is polyol metabolism; 1,2-propanediol degradation. Part of the PduCDE complex that catalyzes the dehydration of 1,2-propanediol (1,2-PD) to propionaldehyde. Localized in the bacterial microcompartment (BMC) dedicated to 1,2-PD degradation. Its function is as follows. Expression of a cosmid containing the full 21-gene pdu operon in E.coli allows E.coli to grow on 1,2-propanediol (1,2-PD) with the appearance of BMCs in its cytoplasm. In terms of biological role, the 1,2-PD-specific bacterial microcompartment (BMC) concentrates low levels of 1,2-PD catabolic enzymes, concentrates volatile reaction intermediates thus enhancing pathway flux and keeps the level of toxic, mutagenic propionaldehyde low. The protein is Propanediol dehydratase small subunit of Citrobacter freundii.